We begin with the raw amino-acid sequence, 240 residues long: Proline-rich antigen homolog (240 aa).

Pro residues-rich tracts occupy residues 1-31 (MTEQPPPGGSYPPPPPPPGPSGGHEPPPAAP) and 38-78 (APPP…PPGP). The interval 1–78 (MTEQPPPGGS…GGYAPPPPGP (78 aa)) is disordered. Positions 89–233 (TPWITRVLAA…KRQTLADKIM (145 aa)) constitute an RDD domain. 3 helical membrane passes run 98–118 (AFIDWAPYVVLVGIGWVIMLV), 142–162 (SMIGQLVQWLLSVGGLAYLVW), and 203–223 (LAHFIDAIICFVGFLFPLWDA).

Belongs to the mycobacterial Pra family.

The protein resides in the cell membrane. This Mycobacterium tuberculosis (strain CDC 1551 / Oshkosh) protein is Proline-rich antigen homolog.